The chain runs to 400 residues: Phosphoglycerate kinase (400 aa).

Substrate-binding positions include Asp24–Asn26, Arg40, His63–Arg66, Arg121, and Arg154. ATP-binding positions include Lys205, Gly296, Glu327, and Gly356 to Ser359.

The protein belongs to the phosphoglycerate kinase family. In terms of assembly, monomer.

The protein localises to the cytoplasm. It catalyses the reaction (2R)-3-phosphoglycerate + ATP = (2R)-3-phospho-glyceroyl phosphate + ADP. The protein operates within carbohydrate degradation; glycolysis; pyruvate from D-glyceraldehyde 3-phosphate: step 2/5. This is Phosphoglycerate kinase from Nostoc punctiforme (strain ATCC 29133 / PCC 73102).